The chain runs to 215 residues: MGGKQSTAGRPRGAFPGVSTDDSAVPPSAHFGHYRPGGTMGLRSRSVSSVAGMGIDHSATVPFGFYTPRGTDSDRAGGGSGSDPAHNGNGYQETGGGHHTDGMLYLGSRASLADTLPLHIAPRWFSAHSGFKCPVCSKSVASNEMEVHFIMCLSKPRLSYNDDVLSRDAGECVICLEELQQGDTIARLPCLCIYHKSCIDSWFEINRSCPEHPSD.

Disordered stretches follow at residues 1 to 39 and 66 to 96; these read MGGK…PGGT and YTPR…ETGG. Residue glycine 2 is the site of N-myristoyl glycine attachment. Residues 172 to 213 form an RING-type; atypical zinc finger; the sequence is CVICLEELQQGDTIARLPCLCIYHKSCIDSWFEINRSCPEHP.

The protein localises to the endosome. The protein resides in the lysosome. It localises to the membrane. It catalyses the reaction S-ubiquitinyl-[E2 ubiquitin-conjugating enzyme]-L-cysteine + [acceptor protein]-L-lysine = [E2 ubiquitin-conjugating enzyme]-L-cysteine + N(6)-ubiquitinyl-[acceptor protein]-L-lysine.. It functions in the pathway protein modification; protein ubiquitination. Its function is as follows. E3 ubiquitin-protein ligase that plays a role in neuron cells differentiation. Plays a role in the establishment and maintenance of neuronal transmission and plasticity. The chain is E3 ubiquitin-protein ligase znrf1 (znrf1) from Danio rerio (Zebrafish).